Consider the following 229-residue polypeptide: Galactonate operon transcriptional repressor (229 aa).

In terms of domain architecture, HTH gntR-type spans 1–71 (MTLNKTDRIV…RYRGAFVAPR (71 aa)). Positions 31–50 (EAELCEEFATSRNIIREVFR) form a DNA-binding region, H-T-H motif. Positions 146, 150, and 195 each coordinate Zn(2+).

Homodimer.

Its activity is regulated as follows. D-galactonate binds DgoR and induces a conformational change in the protein, which decreases its affinity for DNA and consequently derepresses transcription of the dgoRKADT operon. Functionally, involved in the regulation of D-galactonate metabolism. Represses the expression of the dgoRKADT operon by binding to two closely spaced inverted repeats in the cis-acting element, which overlap with the D-galactonate responsive dgo promoter. Employs a derepression mechanism using D-galactonate as a specific effector molecule. This chain is Galactonate operon transcriptional repressor, found in Escherichia coli (strain K12).